Reading from the N-terminus, the 637-residue chain is Threonine--tRNA ligase (637 aa).

A TGS domain is found at 1-61 (MVTVTLPDGS…DADAQLAIVT (61 aa)). The interval 244-535 (DHRRLAKQLD…LIEHHAGNFP (292 aa)) is catalytic. Cys335, His386, and His512 together coordinate Zn(2+).

The protein belongs to the class-II aminoacyl-tRNA synthetase family. As to quaternary structure, homodimer. Requires Zn(2+) as cofactor.

The protein resides in the cytoplasm. The catalysed reaction is tRNA(Thr) + L-threonine + ATP = L-threonyl-tRNA(Thr) + AMP + diphosphate + H(+). Functionally, catalyzes the attachment of threonine to tRNA(Thr) in a two-step reaction: L-threonine is first activated by ATP to form Thr-AMP and then transferred to the acceptor end of tRNA(Thr). Also edits incorrectly charged L-seryl-tRNA(Thr). The polypeptide is Threonine--tRNA ligase (Thiobacillus denitrificans (strain ATCC 25259 / T1)).